Reading from the N-terminus, the 72-residue chain is MHYLLTKPNPKKAGADFVSELIASKLLFGNSYILSALDSYPKEIYLLPALVTELVIEHNNLVSYFDLKLFVR.

The protein belongs to the phage portal family. HK97 subfamily.

This is an uncharacterized protein from Rickettsia conorii (strain ATCC VR-613 / Malish 7).